Consider the following 29-residue polypeptide: Ceratotoxin-B (29 aa).

As to quaternary structure, homomer of four to six subunits.

The protein localises to the secreted. In terms of biological role, female-specific peptides with potent activity against Gram-positive and Gram-negative bacteria. They have as well hemolytic activity. This Ceratitis capitata (Mediterranean fruit fly) protein is Ceratotoxin-B (CTXB).